The sequence spans 338 residues: 5-dehydro-2-deoxygluconokinase (338 aa).

It belongs to the carbohydrate kinase PfkB family.

The catalysed reaction is 5-dehydro-2-deoxy-D-gluconate + ATP = 6-phospho-5-dehydro-2-deoxy-D-gluconate + ADP + H(+). The protein operates within polyol metabolism; myo-inositol degradation into acetyl-CoA; acetyl-CoA from myo-inositol: step 5/7. Functionally, catalyzes the phosphorylation of 5-dehydro-2-deoxy-D-gluconate (2-deoxy-5-keto-D-gluconate or DKG) to 6-phospho-5-dehydro-2-deoxy-D-gluconate (DKGP). This chain is 5-dehydro-2-deoxygluconokinase, found in Mesomycoplasma hyopneumoniae (strain J / ATCC 25934 / NCTC 10110) (Mycoplasma hyopneumoniae).